The primary structure comprises 183 residues: UPF0398 protein LSL_0930 (183 aa).

This sequence belongs to the UPF0398 family.

The protein is UPF0398 protein LSL_0930 of Ligilactobacillus salivarius (strain UCC118) (Lactobacillus salivarius).